Consider the following 96-residue polypeptide: Acetolactate synthase isozyme 1 small subunit (96 aa).

The ACT domain occupies 10-83 (ILELTVRNHP…DVVKVQRNQS (74 aa)).

Belongs to the acetolactate synthase small subunit family. Dimer of large and small chains.

It carries out the reaction 2 pyruvate + H(+) = (2S)-2-acetolactate + CO2. Its pathway is amino-acid biosynthesis; L-isoleucine biosynthesis; L-isoleucine from 2-oxobutanoate: step 1/4. The protein operates within amino-acid biosynthesis; L-valine biosynthesis; L-valine from pyruvate: step 1/4. The chain is Acetolactate synthase isozyme 1 small subunit (ilvN) from Escherichia coli O157:H7.